A 467-amino-acid chain; its full sequence is H(+)/Cl(-) exchange transporter ClcA (467 aa).

At 1-30 (MKSQTIPTRRVRGFRRAAVIRQLLSRDKTP) the chain is on the cytoplasmic side. A helical transmembrane segment spans residues 31–67 (LTILLLASLTGVLAGLAGVAFEKAVAWVTAHRIEGLA). Over 68 to 74 (QVAHIPW) the chain is Periplasmic. A helical transmembrane segment spans residues 75-98 (LVWLLAFLFSALLAMVGYFLVRRF). Residues 99–106 (APEAGGSG) are Cytoplasmic-facing. The Selectivity filter part_1 motif lies at 104 to 108 (GSGIP). Residue Ser-105 coordinates chloride. The segment at residues 107 to 114 (IPEIEGAL) is an intramembrane region (helical). The Cytoplasmic portion of the chain corresponds to 115–121 (EELRPVR). The helical transmembrane segment at 122 to 139 (WWRVLPVKFFGGMGTLGA) threads the bilayer. Topologically, residues 140–145 (GMVLGR) are periplasmic. Residues 144 to 148 (GREGP) carry the Selectivity filter part_2 motif. The helical transmembrane segment at 146-164 (EGPMVQMGGNIGRMVLDIF) threads the bilayer. Residues 165-174 (HRPDAEARHT) lie on the Cytoplasmic side of the membrane. 2 intramembrane regions (helical) span residues 175–187 (LLATGAAAGLAAA) and 191–199 (PLAGILFII). Over 200–212 (EEMRTQFHYNLIS) the chain is Cytoplasmic. The helical transmembrane segment at 213 to 230 (IKAVFTGVIMSTIVFRIF) threads the bilayer. Residues 231–250 (NGEKSVIEVGQLTDAPVYTL) are Periplasmic-facing. Residues 251-279 (WLYLLLGIIFGAVGPLFNRLVLGMQDVFA) traverse the membrane as a helical segment. Residues 280 to 285 (RIHGGN) lie on the Cytoplasmic side of the membrane. A helical membrane pass occupies residues 286 to 307 (TTRWVLLGGAIGGACGLLALWE). Over 308–327 (PAAAGGGFGLIPIAAAGNFT) the chain is Periplasmic. The helical transmembrane segment at 328-347 (VGMLLFIFIARVVTTVFCFS) threads the bilayer. Topologically, residues 348-352 (SGAPG) are cytoplasmic. The Selectivity filter part_3 motif lies at 353–357 (GIFAP). A helical membrane pass occupies residues 353–374 (GIFAPMLALGTLLGSAFGMACA). Chloride is bound by residues Ile-354 and Phe-355. The Periplasmic segment spans residues 375-384 (AWFPQWHLQA). The segment at residues 385–399 (GTFAIAGMGALLAAS) is an intramembrane region (helical). The segment at residues 400–402 (VRA) is an intramembrane region (note=Loop between two helices). The segment at residues 403 to 414 (PITGIVLVLEMT) is an intramembrane region (helical). An intramembrane region (note=Loop between two helices) is located at residues 415 to 419 (DNYQL). The chain crosses the membrane as a helical span at residues 420-436 (ILPMIITCLGATLLAQF). Residues 437-467 (LGGKPLYSTILARTLAKQEAERQAQADGRNT) are Cytoplasmic-facing. Residue Tyr-443 participates in chloride binding.

The protein belongs to the chloride channel (TC 2.A.49) family. ClcA subfamily. In terms of assembly, homodimer.

The protein resides in the cell inner membrane. It carries out the reaction 2 chloride(in) + H(+)(out) = 2 chloride(out) + H(+)(in). Proton-coupled chloride transporter. Functions as antiport system and exchanges two chloride ions for 1 proton. Probably acts as an electrical shunt for an outwardly-directed proton pump that is linked to amino acid decarboxylation, as part of the extreme acid resistance (XAR) response. The protein is H(+)/Cl(-) exchange transporter ClcA of Cronobacter sakazakii (strain ATCC BAA-894) (Enterobacter sakazakii).